A 519-amino-acid polypeptide reads, in one-letter code: Probable cytosol aminopeptidase (519 aa).

Mn(2+) is bound by residues lysine 283 and aspartate 288. Lysine 295 is an active-site residue. Aspartate 306, aspartate 365, and glutamate 367 together coordinate Mn(2+). Residue arginine 369 is part of the active site.

It belongs to the peptidase M17 family. Mn(2+) is required as a cofactor.

It is found in the cytoplasm. It carries out the reaction Release of an N-terminal amino acid, Xaa-|-Yaa-, in which Xaa is preferably Leu, but may be other amino acids including Pro although not Arg or Lys, and Yaa may be Pro. Amino acid amides and methyl esters are also readily hydrolyzed, but rates on arylamides are exceedingly low.. The catalysed reaction is Release of an N-terminal amino acid, preferentially leucine, but not glutamic or aspartic acids.. In terms of biological role, presumably involved in the processing and regular turnover of intracellular proteins. Catalyzes the removal of unsubstituted N-terminal amino acids from various peptides. The chain is Probable cytosol aminopeptidase from Mycobacterium marinum (strain ATCC BAA-535 / M).